A 78-amino-acid chain; its full sequence is Beta-defensin 105A (78 aa).

The N-terminal stretch at 1 to 27 is a signal peptide; the sequence is MALIRKTFYFLFAVFFILVQLPSGCQA. 3 disulfide bridges follow: Cys-43-Cys-74, Cys-53-Cys-67, and Cys-57-Cys-73.

It belongs to the beta-defensin family.

It localises to the secreted. In terms of biological role, has antimicrobial activity. This chain is Beta-defensin 105A (DEFB105A), found in Gorilla gorilla gorilla (Western lowland gorilla).